The chain runs to 397 residues: DNA-binding protein (397 aa).

2 residues coordinate Zn(2+): C116 and H118. The tract at residues 129–161 is flexible loop; it reads IEMAATSESGVAALKEGRGAVEINRWGRQVVKI. Zn(2+) contacts are provided by C169, C185, C225, C227, C276, and C289. Residues 335–397 form a C-terminal arm, DBP binding region; it reads ALLPEGSVNE…IVLESSEEDE (63 aa). The segment at 338 to 397 is disordered; that stretch reads PEGSVNEDENPFGLDNSEDEEEVVPPSPPSPARKRTRTTVAEVHHKKKKKIVLESSEEDE. The segment covering 342–360 has biased composition (acidic residues); sequence VNEDENPFGLDNSEDEEEV.

It belongs to the adenoviridae E2A DNA-binding protein family. As to quaternary structure, homomultimerizes on viral ssDNA bound to pTP. Forms a initiation complex with viral polymerase, pTP and hosts NFIA and POU2F1/OCT1. Interacts with host SRCAP.

The protein localises to the host nucleus. Plays a role in the elongation phase of viral strand displacement replication by unwinding the template in an ATP-independent fashion, employing its capacity to form multimers. Also enhances the rate of initiation. Released from template upon second strand synthesis. Assembles in complex with viral pTP, viral pol, host NFIA and host POU2F1/OCT1 on viral origin of replication. Covers the whole ssDNA genome during synthesis. The complementary strand synthesis induces its relese from DNA template. May inhibit cellular transcription mediated by the interaction between host SRCAP and CBP. The sequence is that of DNA-binding protein from Snake adenovirus serotype 1 (SnAdV-1).